The following is a 179-amino-acid chain: MKSTAISRRYAKSLVNLAAPDGQLESTYTQLEQIQQAFACEPRLYKLLASPTLAADKIAGLLEGIGNYLQLSTTLRNLLGLLQQRQRLEYFDALVADYRELADVQLGLVRARVCSAAPLDAEVQQAISAQLQKRYGKQAVLELAVEPELLGGVRIEVAGQVLDGTIRSGLRRMAGYLNS.

Belongs to the ATPase delta chain family. As to quaternary structure, F-type ATPases have 2 components, F(1) - the catalytic core - and F(0) - the membrane proton channel. F(1) has five subunits: alpha(3), beta(3), gamma(1), delta(1), epsilon(1). F(0) has three main subunits: a(1), b(2) and c(10-14). The alpha and beta chains form an alternating ring which encloses part of the gamma chain. F(1) is attached to F(0) by a central stalk formed by the gamma and epsilon chains, while a peripheral stalk is formed by the delta and b chains.

It localises to the cell inner membrane. Functionally, f(1)F(0) ATP synthase produces ATP from ADP in the presence of a proton or sodium gradient. F-type ATPases consist of two structural domains, F(1) containing the extramembraneous catalytic core and F(0) containing the membrane proton channel, linked together by a central stalk and a peripheral stalk. During catalysis, ATP synthesis in the catalytic domain of F(1) is coupled via a rotary mechanism of the central stalk subunits to proton translocation. This protein is part of the stalk that links CF(0) to CF(1). It either transmits conformational changes from CF(0) to CF(1) or is implicated in proton conduction. The protein is ATP synthase subunit delta 2 of Syntrophotalea carbinolica (strain DSM 2380 / NBRC 103641 / GraBd1) (Pelobacter carbinolicus).